Here is a 373-residue protein sequence, read N- to C-terminus: Sorting nexin-21 (373 aa).

The tract at residues 1 to 107 (MHRGTQEGAM…RSPPPDGQWG (107 aa)) is disordered. Positions 21–37 (ALAGDGPGEAAASPEAE) are enriched in low complexity. Residues 55-65 (SRLSGTLSFTS) are compositionally biased toward polar residues. Over residues 66–81 (AEDDEDDEDEDDEEAG) the composition is skewed to acidic residues. The 118-residue stretch at 129–246 (QRLLFEVTSA…DFFVLPELRR (118 aa)) folds into the PX domain. R171, S173, K198, and R212 together coordinate a 1,2-diacyl-sn-glycero-3-phospho-(1D-myo-inositol-3-phosphate).

Belongs to the sorting nexin family. Monomer. As to expression, highly expressed in fetus liver, but only weakly expressed in brain, skeleton muscle, smooth muscle, and cardiac muscle, kidney, and adrenal gland.

It is found in the cytoplasmic vesicle membrane. The protein resides in the early endosome membrane. Binds to membranes enriched in phosphatidylinositol 3-phosphate (PtdIns(P3)) and phosphatidylinositol 4,5-bisphosphate. May be involved in several stages of intracellular trafficking. This is Sorting nexin-21 (SNX21) from Homo sapiens (Human).